The following is a 101-amino-acid chain: Protein translation factor SUI1 homolog (101 aa).

It belongs to the SUI1 family.

This is Protein translation factor SUI1 homolog from Methanosphaera stadtmanae (strain ATCC 43021 / DSM 3091 / JCM 11832 / MCB-3).